The chain runs to 207 residues: HAAFTVAHEIGHLLGLSHDDSKFCEENFGSTEDKRLMSSILTSIDASKPWSKCTSATITEFLDDGHGNCLLDLPRKQIPGPEELPGQTYDASQQCNLTFGPEYSVCPGMDVCARLWCAVVRQGQMVCLTKKLPAVEGTPCGKGRICLQGKCVDKTKKKYYSTSSHGNWGSWGSWGQCSRSCGGGVQFAYRHCNNPAPKNNGRYCTGK.

In terms of domain architecture, Peptidase M12B spans 1–74; sequence HAAFTVAHEI…GHGNCLLDLP (74 aa). Position 8 (His8) interacts with Zn(2+). The active site involves Glu9. Zn(2+)-binding residues include His12 and His18. Intrachain disulfides connect Cys24–Cys53, Cys95–Cys117, Cys106–Cys127, Cys112–Cys146, and Cys140–Cys151. Positions 83–164 constitute a Disintegrin domain; the sequence is ELPGQTYDAS…TKKKYYSTSS (82 aa). An N-linked (GlcNAc...) asparagine glycan is attached at Asn96. Residues 165–205 form the TSP type-1 domain; the sequence is HGNWGSWGSWGQCSRSCGGGVQFAYRHCNNPAPKNNGRYCT. Trp168 and Trp171 each carry a C-linked (Man) tryptophan glycan. A glycan (O-linked (Fuc...) serine) is linked at Ser180.

It depends on Zn(2+) as a cofactor. Post-translationally, the precursor is cleaved by furin and PCSK7 outside of the cell. In terms of processing, glycosylated. Can be O-fucosylated by POFUT2 on a serine or a threonine residue found within the consensus sequence C1-X(2)-(S/T)-C2-G of the TSP type-1 repeat domains where C1 and C2 are the first and second cysteine residue of the repeat, respectively. Fucosylated repeats can then be further glycosylated by the addition of a beta-1,3-glucose residue by the glucosyltransferase, B3GALTL. Fucosylation mediates the efficient secretion of ADAMTS family members. Can also be C-glycosylated with one or two mannose molecules on tryptophan residues within the consensus sequence W-X-X-W of the TPRs, and N-glycosylated. These other glycosylations can also facilitate secretion.

The protein resides in the secreted. It localises to the extracellular space. Its subcellular location is the extracellular matrix. In terms of biological role, metalloproteinase that plays an important role in connective tissue organization, development, inflammation and cell migration. Extracellular matrix (ECM) degrading enzyme that shows proteolytic activity toward the hyalectan group of chondroitin sulfate proteoglycans (CSPGs) including ACAN, VCAN, BCAN and NCAN. Cleavage within the hyalectans occurs at Glu-Xaa recognition motifs. Plays a role in embryonic development, including limb and cardiac morphogenesis, and skeletal muscle development through its VCAN remodeling properties. Cleaves VCAN in the pericellular matrix surrounding myoblasts, facilitating myoblast contact and fusion which is required for skeletal muscle development and regeneration. Participates in the development of brown adipose tissue and browning of white adipose tissue. Plays an important role for T-lymphocyte migration from draining lymph nodes following viral infection. The sequence is that of A disintegrin and metalloproteinase with thrombospondin motifs 5 (ADAMTS5) from Bos taurus (Bovine).